Here is a 303-residue protein sequence, read N- to C-terminus: Bidirectional sugar transporter SWEET14 (303 aa).

Topologically, residues 1–9 are extracellular; that stretch reads MAGMSLQHP. Residues 10 to 30 traverse the membrane as a helical segment; sequence WAFAFGLLGNIISFMTYLAPL. Residues 13–98 enclose the MtN3/slv 1 domain; it reads AFGLLGNIIS…AVYLVYAPKK (86 aa). The Cytoplasmic portion of the chain corresponds to 31–44; it reads PTFYRIYKSKSTQG. Residues 45-65 form a helical membrane-spanning segment; that stretch reads FQSVPYVVALFSAMLWIYYAL. The Extracellular segment spans residues 66–72; the sequence is LKSDECL. Residues 73–93 traverse the membrane as a helical segment; the sequence is LITINSAGCVIETIYIAVYLV. Residues 94–105 are Cytoplasmic-facing; sequence YAPKKAKMFTAK. The chain crosses the membrane as a helical span at residues 106–126; the sequence is LLLLVNVGVFGLILLLTLLLS. Over 127–133 the chain is Extracellular; sequence AGDRRIV. The chain crosses the membrane as a helical span at residues 134-154; that stretch reads VLGWVCVGFSVSVFVAPLSII. The region spanning 134 to 217 is the MtN3/slv 2 domain; that stretch reads VLGWVCVGFS…MGLYAMYRNS (84 aa). Topologically, residues 155 to 167 are cytoplasmic; the sequence is RLVVRTKSVEFMP. Residues 168–188 form a helical membrane-spanning segment; sequence FSLSFSLTISAVVWFLYGLLI. Topologically, residues 189-192 are extracellular; it reads KDKY. The chain crosses the membrane as a helical span at residues 193–213; sequence VALPNVLGFSFGVIQMGLYAM. The Cytoplasmic portion of the chain corresponds to 214–303; the sequence is YRNSTPKAVL…AGAGEKKVAA (90 aa). The interval 266–290 is disordered; the sequence is HPVDVESPPAEAPPEEDDKAAAATA.

This sequence belongs to the SWEET sugar transporter family. As to quaternary structure, forms homooligomers and/or heterooligomers.

It is found in the cell membrane. In terms of biological role, mediates both low-affinity uptake and efflux of sugar across the plasma membrane. Its function is as follows. Confers blight susceptibility. Confers TAL effector-mediated susceptibility to Xanthomonas oryzae pv. oryzae. The protein is Bidirectional sugar transporter SWEET14 (SWEET14) of Oryza sativa subsp. japonica (Rice).